A 155-amino-acid chain; its full sequence is Sperm microtubule associated protein 1 (155 aa).

The sequence is that of Sperm microtubule associated protein 1 (Spmap1) from Mus musculus (Mouse).